The chain runs to 108 residues: Protein Asterix (108 aa).

A disordered region spans residues 1–29 (MNMTVDPRRKEKINRYKAPKNQGQSGGAN). Residues 80-96 (VLSSFMLSVSAVVMSYL) traverse the membrane as a helical segment.

It belongs to the Asterix family.

Its subcellular location is the membrane. The chain is Protein Asterix from Drosophila melanogaster (Fruit fly).